Reading from the N-terminus, the 127-residue chain is Fluoride-specific ion channel FluC (127 aa).

The next 3 membrane-spanning stretches (helical) occupy residues Leu28 to Met48, Thr73 to Ile93, and Val98 to Leu118. Positions 77 and 80 each coordinate Na(+).

Belongs to the fluoride channel Fluc/FEX (TC 1.A.43) family.

Its subcellular location is the cell inner membrane. It carries out the reaction fluoride(in) = fluoride(out). With respect to regulation, na(+) is not transported, but it plays an essential structural role and its presence is essential for fluoride channel function. In terms of biological role, fluoride-specific ion channel. Important for reducing fluoride concentration in the cell, thus reducing its toxicity. The sequence is that of Fluoride-specific ion channel FluC from Beijerinckia indica subsp. indica (strain ATCC 9039 / DSM 1715 / NCIMB 8712).